Reading from the N-terminus, the 487-residue chain is Probable cobyric acid synthase (487 aa).

The 187-residue stretch at 249 to 435 (DVDIAVVRFP…LHGIFNNASF (187 aa)) folds into the GATase cobBQ-type domain. Cysteine 328 (nucleophile) is an active-site residue. Histidine 427 is an active-site residue.

This sequence belongs to the CobB/CobQ family. CobQ subfamily.

It participates in cofactor biosynthesis; adenosylcobalamin biosynthesis. Catalyzes amidations at positions B, D, E, and G on adenosylcobyrinic A,C-diamide. NH(2) groups are provided by glutamine, and one molecule of ATP is hydrogenolyzed for each amidation. In Methanocella arvoryzae (strain DSM 22066 / NBRC 105507 / MRE50), this protein is Probable cobyric acid synthase.